Here is a 682-residue protein sequence, read N- to C-terminus: T-box brain protein 1 (682 aa).

Disordered regions lie at residues 43–83 (TDNL…RSKL) and 108–127 (SQSS…FPYP). A compositionally biased stretch (polar residues) spans 58–68 (GMTNQSDTDNF). Positions 108–122 (SQSSQPQSAATAPSA) are enriched in low complexity. The segment at residues 213 to 393 (LWLKFHRHQT…HNPFAKGFRD (181 aa)) is a DNA-binding region (T-box). Residue threonine 408 is modified to Phosphothreonine. At serine 410 the chain carries Phosphoserine. 2 disordered regions span residues 447–483 (PGAG…SPQR) and 588–658 (GLAA…KSEV). Positions 462 to 472 (PHTNGLLSPQQ) are enriched in polar residues. The residue at position 594 (serine 594) is a Phosphoserine. Low complexity predominate over residues 619-629 (SSIKSIDSSDS). Residue serine 641 is modified to Phosphoserine.

Homodimer. Part of a complex containing CASK, TBR1 and TSPYL2; may modulate gene expression in response to neuronal synaptic activity. Interacts with FOXP2. Interacts with FOXP1. Interacts with BCL11A. As to expression, brain.

It is found in the nucleus. Functionally, transcriptional repressor involved in multiple aspects of cortical development, including neuronal migration, laminar and areal identity, and axonal projection. As transcriptional repressor of FEZF2, it blocks the formation of the corticospinal (CS) tract from layer 6 projection neurons, thereby restricting the origin of CS axons specifically to layer 5 neurons. This is T-box brain protein 1 (TBR1) from Homo sapiens (Human).